The chain runs to 389 residues: Dirigent protein 25 (389 aa).

The first 21 residues, 1–21 (MAGCKVLFFLILALAITFVSA), serve as a signal peptide directing secretion. Low complexity-rich tracts occupy residues 50 to 68 (GPFP…SGTG), 77 to 86 (LGTNTGPGPL), and 98 to 135 (SSGT…PLPT). The disordered stretch occupies residues 50–135 (GPFPTANSGP…PGSGSGPLPT (86 aa)).

Belongs to the plant dirigent protein family. As to quaternary structure, homodimer.

The protein localises to the secreted. The protein resides in the extracellular space. It localises to the apoplast. Its function is as follows. Dirigent proteins impart stereoselectivity on the phenoxy radical-coupling reaction, yielding optically active lignans from two molecules of coniferyl alcohol in the biosynthesis of lignans, flavonolignans, and alkaloids and thus plays a central role in plant secondary metabolism. The protein is Dirigent protein 25 (DIR25) of Arabidopsis thaliana (Mouse-ear cress).